The following is a 158-amino-acid chain: NAD(P)H-quinone oxidoreductase subunit J, chloroplastic (158 aa).

It belongs to the complex I 30 kDa subunit family. In terms of assembly, NDH is composed of at least 16 different subunits, 5 of which are encoded in the nucleus.

Its subcellular location is the plastid. The protein resides in the chloroplast thylakoid membrane. It carries out the reaction a plastoquinone + NADH + (n+1) H(+)(in) = a plastoquinol + NAD(+) + n H(+)(out). It catalyses the reaction a plastoquinone + NADPH + (n+1) H(+)(in) = a plastoquinol + NADP(+) + n H(+)(out). Its function is as follows. NDH shuttles electrons from NAD(P)H:plastoquinone, via FMN and iron-sulfur (Fe-S) centers, to quinones in the photosynthetic chain and possibly in a chloroplast respiratory chain. The immediate electron acceptor for the enzyme in this species is believed to be plastoquinone. Couples the redox reaction to proton translocation, and thus conserves the redox energy in a proton gradient. In Cryptomeria japonica (Japanese cedar), this protein is NAD(P)H-quinone oxidoreductase subunit J, chloroplastic.